The chain runs to 632 residues: tRNA uridine 5-carboxymethylaminomethyl modification enzyme MnmG (632 aa).

Residues 15–20, Ile127, and Ser182 contribute to the FAD site; that span reads GAGHAG. 276-290 provides a ligand contact to NAD(+); it reads GPRYCPSIEDKIVRF. Residue Gln373 participates in FAD binding.

Belongs to the MnmG family. As to quaternary structure, homodimer. Heterotetramer of two MnmE and two MnmG subunits. FAD serves as cofactor.

It is found in the cytoplasm. Functionally, NAD-binding protein involved in the addition of a carboxymethylaminomethyl (cmnm) group at the wobble position (U34) of certain tRNAs, forming tRNA-cmnm(5)s(2)U34. This chain is tRNA uridine 5-carboxymethylaminomethyl modification enzyme MnmG, found in Streptococcus pyogenes serotype M6 (strain ATCC BAA-946 / MGAS10394).